Consider the following 304-residue polypeptide: Acetyl-coenzyme A carboxylase carboxyl transferase subunit beta (304 aa).

The CoA carboxyltransferase N-terminal domain occupies 23 to 292 (VWTKCDSCGQ…PNPEAPREGV (270 aa)). 4 residues coordinate Zn(2+): C27, C30, C46, and C49. The C4-type zinc-finger motif lies at 27–49 (CDSCGQVLYRAELERNLEVCPKC). Positions 284 to 304 (NPEAPREGVVVPPVPDQEPEA) are disordered. The segment covering 295-304 (PPVPDQEPEA) has biased composition (pro residues).

Belongs to the AccD/PCCB family. Acetyl-CoA carboxylase is a heterohexamer composed of biotin carboxyl carrier protein (AccB), biotin carboxylase (AccC) and two subunits each of ACCase subunit alpha (AccA) and ACCase subunit beta (AccD). Zn(2+) is required as a cofactor.

The protein localises to the cytoplasm. It catalyses the reaction N(6)-carboxybiotinyl-L-lysyl-[protein] + acetyl-CoA = N(6)-biotinyl-L-lysyl-[protein] + malonyl-CoA. It functions in the pathway lipid metabolism; malonyl-CoA biosynthesis; malonyl-CoA from acetyl-CoA: step 1/1. Its function is as follows. Component of the acetyl coenzyme A carboxylase (ACC) complex. Biotin carboxylase (BC) catalyzes the carboxylation of biotin on its carrier protein (BCCP) and then the CO(2) group is transferred by the transcarboxylase to acetyl-CoA to form malonyl-CoA. This is Acetyl-coenzyme A carboxylase carboxyl transferase subunit beta from Shigella boydii serotype 4 (strain Sb227).